A 601-amino-acid polypeptide reads, in one-letter code: Coronin-like protein crn1 (601 aa).

WD repeat units follow at residues 79–119 (GHTA…TVME), 132–172 (GHSR…AHVS), 174–213 (KMDVMCQSMSFNADGTRLVTTSRDKKVRVWDPRTDKPVSV), 220–260 (AKNP…EPIG), and 266–306 (DTGS…FHYL). Disordered stretches follow at residues 361–386 (SDIYPPAPSGKPSLTAEEWASGKDAQ) and 407–540 (SATV…VEEK). Composition is skewed to basic and acidic residues over residues 419-429 (KHNEEKVETPK), 437-453 (KPKESAEEQKPSKEPEV), and 462-495 (KVEEPSKKRDEDNHQKEETVTQPKREKTPVEKSF). Residues Ser500 and Ser501 each carry the phosphoserine modification. A compositionally biased stretch (basic and acidic residues) spans 507-526 (EDVKKEPSEEKKLEVSDEAP). Ser553 is modified (phosphoserine). Residues 556–600 (NLADLNKRFEGFEKRYEEELAIRDWKIAQLEDKLAKLTEAIKEKC) are a coiled coil.

This sequence belongs to the WD repeat coronin family. In terms of assembly, binds to F-actin.

This Schizosaccharomyces pombe (strain 972 / ATCC 24843) (Fission yeast) protein is Coronin-like protein crn1 (crn1).